A 213-amino-acid chain; its full sequence is Large ribosomal subunit protein uL4 (213 aa).

The interval glycine 41–proline 75 is disordered.

Belongs to the universal ribosomal protein uL4 family. Part of the 50S ribosomal subunit.

Functionally, one of the primary rRNA binding proteins, this protein initially binds near the 5'-end of the 23S rRNA. It is important during the early stages of 50S assembly. It makes multiple contacts with different domains of the 23S rRNA in the assembled 50S subunit and ribosome. Forms part of the polypeptide exit tunnel. In Deinococcus geothermalis (strain DSM 11300 / CIP 105573 / AG-3a), this protein is Large ribosomal subunit protein uL4.